The primary structure comprises 320 residues: TATA box-binding protein-like 2 (320 aa).

Belongs to the TBP family. Expression is restricted to the gonads, and is higher in the ovary than the testis.

The protein localises to the nucleus. Functionally, TATA box-binding transcription factor. Members of the TBP family are differentially required to regulate transcription and development during early embryogenesis. Required for gastrulation. Regulates a large subset of genes that are ventrally expressed. Binds to a subset of promoters. This Xenopus laevis (African clawed frog) protein is TATA box-binding protein-like 2.